The sequence spans 445 residues: MVKKPISSSDEVFKFEIPSSPKSSAGASHSSTDSPSSVFLSSEAENGVEDRKRFSKSPTAQSPTSSVEAESPDQKRSLGLWSKSSFDGSNLLSDKNDCKTESKADSKTERKKSSSSSQYKANMHFHKLFLDVPTEEPLRQSFTCALQKEILYQGKLFVSENWICFHSKVFGKDTKISIPAFSVTLIKKTKTALLVPNALIIATVTDRYIFVSLLSRDSTYKLLKSICGHLENTSVGNSPNPSSAENSFRADRPSSLRLDFNDEFSDLDGVVQQRRQDLEGYSSSGSQTPESENSRDFHVTESQTVLNVTKGETKPPRTDAHGSRAPDGKAKILPAHGQSETIGILHKMESRKCPTLRHILIFYAIIVCALIISTFYMRYRINTLEERLGSLTSIMDPHSTEQTAPSSLGSQVQLNVEVLCQELTANIVTLEKIQNNLQKLLENGD.

N-acetylmethionine is present on methionine 1. Positions 1-10 (MVKKPISSSD) are enriched in polar residues. A disordered region spans residues 1-119 (MVKKPISSSD…RKKSSSSSQY (119 aa)). Low complexity predominate over residues 18–37 (PSSPKSSAGASHSSTDSPSS). Polar residues-rich tracts occupy residues 56 to 68 (KSPTAQSPTSSVE) and 82 to 93 (SKSSFDGSNLLS). Residues 94–112 (DKNDCKTESKADSKTERKK) show a composition bias toward basic and acidic residues. One can recognise a GRAM domain in the interval 123–190 (MHFHKLFLDV…FSVTLIKKTK (68 aa)). Phosphoserine is present on residues serine 238, serine 255, and serine 265. Positions 277–331 (DLEGYSSSGSQTPESENSRDFHVTESQTVLNVTKGETKPPRTDAHGSRAPDGKAK) are disordered. Residues 281 to 291 (YSSSGSQTPES) show a composition bias toward polar residues. Positions 311–330 (GETKPPRTDAHGSRAPDGKA) are enriched in basic and acidic residues.

This chain is GRAM domain-containing protein 2B (Gramd2b), found in Rattus norvegicus (Rat).